The following is a 92-amino-acid chain: UPF0223 protein EF_2462 (92 aa).

Belongs to the UPF0223 family.

The polypeptide is UPF0223 protein EF_2462 (Enterococcus faecalis (strain ATCC 700802 / V583)).